The following is a 179-amino-acid chain: Large ribosomal subunit protein uL5 (179 aa).

The protein belongs to the universal ribosomal protein uL5 family. As to quaternary structure, part of the 50S ribosomal subunit; part of the 5S rRNA/L5/L18/L25 subcomplex. Contacts the 5S rRNA and the P site tRNA. Forms a bridge to the 30S subunit in the 70S ribosome.

This is one of the proteins that bind and probably mediate the attachment of the 5S RNA into the large ribosomal subunit, where it forms part of the central protuberance. In the 70S ribosome it contacts protein S13 of the 30S subunit (bridge B1b), connecting the 2 subunits; this bridge is implicated in subunit movement. Contacts the P site tRNA; the 5S rRNA and some of its associated proteins might help stabilize positioning of ribosome-bound tRNAs. This is Large ribosomal subunit protein uL5 from Delftia acidovorans (strain DSM 14801 / SPH-1).